A 365-amino-acid chain; its full sequence is Phospho-N-acetylmuramoyl-pentapeptide-transferase (365 aa).

A run of 10 helical transmembrane segments spans residues 3–23 (HIII…PILI), 54–74 (GIAI…ASVF), 81–101 (PTAS…LGFL), 119–139 (GKLL…LLFL), 162–182 (IAIG…YILV), 198–218 (LAAG…FWQF), 239–259 (LSIL…WNAA), 263–283 (IFMG…LSVT), 289–309 (LMIV…IQVV), and 342–362 (FWLL…ADWL).

The protein belongs to the glycosyltransferase 4 family. MraY subfamily. The cofactor is Mg(2+).

It localises to the cell membrane. It carries out the reaction UDP-N-acetyl-alpha-D-muramoyl-L-alanyl-gamma-D-glutamyl-meso-2,6-diaminopimeloyl-D-alanyl-D-alanine + di-trans,octa-cis-undecaprenyl phosphate = di-trans,octa-cis-undecaprenyl diphospho-N-acetyl-alpha-D-muramoyl-L-alanyl-D-glutamyl-meso-2,6-diaminopimeloyl-D-alanyl-D-alanine + UMP. It participates in cell wall biogenesis; peptidoglycan biosynthesis. Functionally, catalyzes the initial step of the lipid cycle reactions in the biosynthesis of the cell wall peptidoglycan: transfers peptidoglycan precursor phospho-MurNAc-pentapeptide from UDP-MurNAc-pentapeptide onto the lipid carrier undecaprenyl phosphate, yielding undecaprenyl-pyrophosphoryl-MurNAc-pentapeptide, known as lipid I. The polypeptide is Phospho-N-acetylmuramoyl-pentapeptide-transferase (Corynebacterium kroppenstedtii (strain DSM 44385 / JCM 11950 / CIP 105744 / CCUG 35717)).